Reading from the N-terminus, the 589-residue chain is MASSSSPERGLEALRDTDESEGEAPGPSGPRGRGGPSGAGSALRLRSLEAEMAAACVTSTAGEDLGTFSEPGSQHGDPEGGGGPDLELGHARPMMRSQRELGLTPKGGGKADQGGKGRKGGSGSPPHTKSSRKREQPNPNRSLMAQGAAGPPLPGARGSPAMPQPESSLSPRPDQSHHFDFPVGNLEAPGPTLRSSTSQGSGSTPVPEALRCAESSRAESDQSSPAGRELRQQASPRAPDDDDDGDGGPDPRGSGTPEGWVLRSGVVPFGRRSSASEVSPEEVRPEAQCTGWNLRPRPRSSASAVSPEARPKAQSAGRNLRPRPRSSASVVSPEARPKAQSAGRNLRPRPRSSASVVSPEARPEAQSAGRNLRPRATPRVPVAPSSTTRSSSDRGSSRAPRSRSRSRSCSTPRLGSDHQRSRKIKMRLDLQVDREPESEAEQEEQELESEPGPSSRPQASRSSSRFAVPGRSSLAAEDSPPRRPVRMRASSPSPPGRLYPLPKHYFEGVHSPSSSSSESSSVSSSHSPLNKAPDPGSSPPLSSLSGPNPFWLALIADLDNLDSSSPRVPGEEIEAAPHTREEEDKKCRG.

Disordered regions lie at residues 1-46 (MASS…LRLR), 61-548 (AGED…SGPN), and 561-589 (LDSSSPRVPGEEIEAAPHTREEEDKKCRG). Gly residues-rich tracts occupy residues 29 to 38 (GPRGRGGPSG) and 105 to 114 (PKGGGKADQG). Residues 147-161 (GAAGPPLPGARGSPA) show a composition bias toward low complexity. Positions 193-204 (LRSSTSQGSGST) are enriched in polar residues. Low complexity-rich tracts occupy residues 299–308 (RSSASAVSPE), 325–334 (RSSASVVSPE), 351–360 (RSSASVVSPE), and 374–390 (PRATPRVPVAPSSTTRS). Serine 306 bears the Phosphoserine mark. Positions 426–437 (MRLDLQVDREPE) are enriched in basic and acidic residues. Over residues 438–449 (SEAEQEEQELES) the composition is skewed to acidic residues. Positions 450–465 (EPGPSSRPQASRSSSR) are enriched in low complexity. Positions 482–490 (RRPVRMRAS) are sufficient for interaction with EZH2. The necessary and sufficient for inhibition of PRC2/EED-EZH1 and PRC2/EED-EZH2 complex activity stretch occupies residues 484–503 (PVRMRASSPSPPGRLYPLPK). Residues 509–547 (VHSPSSSSSESSSVSSSHSPLNKAPDPGSSPPLSSLSGP) show a composition bias toward low complexity. Residues 575–589 (AAPHTREEEDKKCRG) show a composition bias toward basic and acidic residues.

In terms of assembly, interacts with PRC2/EED-EZH1 complex member EZH1 and with PRC2/EED-EZH2 complex member EZH2; the interaction blocks EZH1/EZH2 methyltransferase activity. Interacts (via C-terminus) with SUZ12 which is a member of the PRC2/EED-EZH1 and PRC2/EED-EZH2 complexes. In terms of tissue distribution, highly expressed in ovary with lower expression in testis and very low levels in other tissues tested including prostate, brain, kidney, spleen and liver. During spermatogenesis, expressed mainly in spermatogonia with very low expression in spermatocytes I and II.

The protein localises to the nucleus. Its subcellular location is the cytoplasm. Functionally, inhibits PRC2/EED-EZH1 and PRC2/EED-EZH2 complex function by inhibiting EZH1/EZH2 methyltransferase activity, thereby causing down-regulation of histone H3 trimethylation at 'Lys-27' (H3K27me3). Probably inhibits methyltransferase activity by limiting the stimulatory effect of cofactors such as AEBP2 and JARID2. Inhibits H3K27me3 deposition during spermatogenesis and oogenesis. This Mus musculus (Mouse) protein is EZH inhibitory protein.